We begin with the raw amino-acid sequence, 946 residues long: Protocadherin alpha-10 (946 aa).

Positions 1–30 (MSCVAMKYCHESWCLLLSLLLFAIWEPGSG) are cleaved as a signal peptide. Cadherin domains follow at residues 31–134 (QLRY…PPVF), 135–243 (PTTE…APAF), 244–351 (DRAI…APKI), 352–456 (IVTS…APAF), 457–566 (AQSE…APTL), and 582–679 (VPRS…APKA). The Extracellular portion of the chain corresponds to 31–697 (QLRYSVPEEA…ASESSVVDVN (667 aa)). Asn-258 carries an N-linked (GlcNAc...) asparagine glycan. Residue Asn-549 is glycosylated (N-linked (GlcNAc...) asparagine). The chain crosses the membrane as a helical span at residues 698–718 (VYLIIAICAVSSLLVLTLVLY). Topologically, residues 719-946 (TALRCSALPT…GNSTTDNSDQ (228 aa)) are cytoplasmic. PXXP repeat units lie at residues 734–737 (PGKP), 774–777 (PSVP), 795–798 (PRQP), 828–831 (PGGP), 869–872 (PGNP), and 887–890 (PGSP). The tract at residues 734–890 (PGKPMLVCSS…PDKFIIPGSP (157 aa)) is 6 X 4 AA repeats of P-X-X-P. Disordered regions lie at residues 826 to 852 (AGPGGPDQQWPTVSSATPEPEAGEVSP) and 865 to 946 (FKYG…NSDQ). Residues 905-919 (DKSDFITFGKKEETK) are compositionally biased toward basic and acidic residues.

The protein localises to the cell membrane. Functionally, potential calcium-dependent cell-adhesion protein. May be involved in the establishment and maintenance of specific neuronal connections in the brain. This is Protocadherin alpha-10 from Mus musculus (Mouse).